The following is a 236-amino-acid chain: Lipoarabinomannan carrier protein LprG (236 aa).

The N-terminal stretch at 1–26 (MRTPRRHCRRIAVLAAVSIAATVVAG) is a signal peptide. A lipid anchor (N-palmitoyl cysteine) is attached at cysteine 27. A lipid anchor (S-diacylglycerol cysteine) is attached at cysteine 27.

This sequence belongs to the LppX/LprAFG lipoprotein family. In terms of processing, modified by Lgt on Cys-27 with an S-linked diacylglyceral, signal peptide is removed by LspA, Cys-27 is further modifed with a fatty acid on its amino group by Lnt yielding a triacylated protein.

The protein localises to the cell inner membrane. It localises to the secreted. Its subcellular location is the cell wall. Its function is as follows. Helps membrane protein Mb1445c (P55) transport triacylglycerides (TAG) across the inner cell membrane into the periplasm and probably ultimately to the outer membrane. Binds TAG in its hydrophobic cavity and transfers it between lipid bilayers. TAG probably regulates lipid metabolism and growth regulation and plays a structural role in the outer membrane. Binds di- and triacylated phosphatidyl-myo-inositol mannosides (PIMs), and glycolipid lipoglycan modulins lipoarabinomannan (LAM) and lipomannan (LM), facilitating their recognition by TLR2. Required for activity of drug efflux transporter Mb1445c. Required, probably with Mb1445c, for normal surface localization of LAM. Functionally, constitutes a host TLR2 agonist (toll-like receptor). The chain is Lipoarabinomannan carrier protein LprG from Mycobacterium bovis (strain ATCC BAA-935 / AF2122/97).